A 200-amino-acid chain; its full sequence is Small ribosomal subunit protein uS4 (200 aa).

The segment at 22–42 (TGKELEKRPYAPGPHGPNQRK) is disordered. Residues 92 to 152 (ARLDNLVYRM…EKSNSLVVVK (61 aa)) enclose the S4 RNA-binding domain.

This sequence belongs to the universal ribosomal protein uS4 family. Part of the 30S ribosomal subunit. Contacts protein S5. The interaction surface between S4 and S5 is involved in control of translational fidelity.

Functionally, one of the primary rRNA binding proteins, it binds directly to 16S rRNA where it nucleates assembly of the body of the 30S subunit. With S5 and S12 plays an important role in translational accuracy. The protein is Small ribosomal subunit protein uS4 of Bacillus cereus (strain B4264).